A 408-amino-acid polypeptide reads, in one-letter code: Putative mannan endo-1,4-beta-mannosidase P (408 aa).

The N-terminal stretch at Met1–Ala23 is a signal peptide. Asn73 carries N-linked (GlcNAc...) asparagine glycosylation. Substrate contacts are provided by Trp85 and Asn201. Glu202 (proton donor) is an active-site residue. Glu322 serves as the catalytic Nucleophile. Trp364 lines the substrate pocket.

This sequence belongs to the glycosyl hydrolase 5 (cellulase A) family.

The protein resides in the secreted. It carries out the reaction Random hydrolysis of (1-&gt;4)-beta-D-mannosidic linkages in mannans, galactomannans and glucomannans.. In Arabidopsis thaliana (Mouse-ear cress), this protein is Putative mannan endo-1,4-beta-mannosidase P (MANP).